The sequence spans 368 residues: Phosphoribosylformylglycinamidine cyclo-ligase (368 aa).

It belongs to the AIR synthase family.

The protein resides in the cytoplasm. It carries out the reaction 2-formamido-N(1)-(5-O-phospho-beta-D-ribosyl)acetamidine + ATP = 5-amino-1-(5-phospho-beta-D-ribosyl)imidazole + ADP + phosphate + H(+). The protein operates within purine metabolism; IMP biosynthesis via de novo pathway; 5-amino-1-(5-phospho-D-ribosyl)imidazole from N(2)-formyl-N(1)-(5-phospho-D-ribosyl)glycinamide: step 2/2. This Chelativorans sp. (strain BNC1) protein is Phosphoribosylformylglycinamidine cyclo-ligase.